Reading from the N-terminus, the 739-residue chain is Phosphoribosylformylglycinamidine synthase subunit PurL (739 aa).

His54 is an active-site residue. Residues Tyr57 and Lys96 each contribute to the ATP site. Residue Glu98 coordinates Mg(2+). Substrate is bound by residues 99-102 (SHNH) and Arg121. The Proton acceptor role is filled by His100. A Mg(2+)-binding site is contributed by Asp122. Gln245 is a binding site for substrate. Asp273 contacts Mg(2+). 317–319 (ESQ) serves as a coordination point for substrate. ATP contacts are provided by Asp500 and Gly537. Asn538 contributes to the Mg(2+) binding site. Ser540 is a substrate binding site.

This sequence belongs to the FGAMS family. Monomer. Part of the FGAM synthase complex composed of 1 PurL, 1 PurQ and 2 PurS subunits.

The protein resides in the cytoplasm. The enzyme catalyses N(2)-formyl-N(1)-(5-phospho-beta-D-ribosyl)glycinamide + L-glutamine + ATP + H2O = 2-formamido-N(1)-(5-O-phospho-beta-D-ribosyl)acetamidine + L-glutamate + ADP + phosphate + H(+). The protein operates within purine metabolism; IMP biosynthesis via de novo pathway; 5-amino-1-(5-phospho-D-ribosyl)imidazole from N(2)-formyl-N(1)-(5-phospho-D-ribosyl)glycinamide: step 1/2. Its function is as follows. Part of the phosphoribosylformylglycinamidine synthase complex involved in the purines biosynthetic pathway. Catalyzes the ATP-dependent conversion of formylglycinamide ribonucleotide (FGAR) and glutamine to yield formylglycinamidine ribonucleotide (FGAM) and glutamate. The FGAM synthase complex is composed of three subunits. PurQ produces an ammonia molecule by converting glutamine to glutamate. PurL transfers the ammonia molecule to FGAR to form FGAM in an ATP-dependent manner. PurS interacts with PurQ and PurL and is thought to assist in the transfer of the ammonia molecule from PurQ to PurL. The chain is Phosphoribosylformylglycinamidine synthase subunit PurL from Bacillus cereus (strain AH187).